The chain runs to 142 residues: Large ribosomal subunit protein bL17 (142 aa).

The protein belongs to the bacterial ribosomal protein bL17 family. Part of the 50S ribosomal subunit. Contacts protein L32.

The chain is Large ribosomal subunit protein bL17 from Wolbachia sp. subsp. Brugia malayi (strain TRS).